Reading from the N-terminus, the 227-residue chain is Cytochrome c oxidase subunit 2 (227 aa).

Residues 1 to 14 (MALPFQLGFQDATS) lie on the Mitochondrial intermembrane side of the membrane. The helical transmembrane segment at 15 to 45 (PIMEELLHFHDHTLMIVFMISSLVLYLISSM) threads the bilayer. At 46–59 (LTTRLTHTSTMDAQ) the chain is on the mitochondrial matrix side. Residues 60 to 87 (EVETIWTILPAIILITIALPSLRILYMM) form a helical membrane-spanning segment. Topologically, residues 88-227 (DEINNPSMTI…CFEKWSTSML (140 aa)) are mitochondrial intermembrane. 6 residues coordinate Cu cation: His161, Cys196, Glu198, Cys200, His204, and Met207. Glu198 is a binding site for Mg(2+).

The protein belongs to the cytochrome c oxidase subunit 2 family. Component of the cytochrome c oxidase (complex IV, CIV), a multisubunit enzyme composed of 14 subunits. The complex is composed of a catalytic core of 3 subunits MT-CO1, MT-CO2 and MT-CO3, encoded in the mitochondrial DNA, and 11 supernumerary subunits COX4I, COX5A, COX5B, COX6A, COX6B, COX6C, COX7A, COX7B, COX7C, COX8 and NDUFA4, which are encoded in the nuclear genome. The complex exists as a monomer or a dimer and forms supercomplexes (SCs) in the inner mitochondrial membrane with NADH-ubiquinone oxidoreductase (complex I, CI) and ubiquinol-cytochrome c oxidoreductase (cytochrome b-c1 complex, complex III, CIII), resulting in different assemblies (supercomplex SCI(1)III(2)IV(1) and megacomplex MCI(2)III(2)IV(2)). Found in a complex with TMEM177, COA6, COX18, COX20, SCO1 and SCO2. Interacts with TMEM177 in a COX20-dependent manner. Interacts with COX20. Interacts with COX16. Cu cation is required as a cofactor.

It is found in the mitochondrion inner membrane. It carries out the reaction 4 Fe(II)-[cytochrome c] + O2 + 8 H(+)(in) = 4 Fe(III)-[cytochrome c] + 2 H2O + 4 H(+)(out). Functionally, component of the cytochrome c oxidase, the last enzyme in the mitochondrial electron transport chain which drives oxidative phosphorylation. The respiratory chain contains 3 multisubunit complexes succinate dehydrogenase (complex II, CII), ubiquinol-cytochrome c oxidoreductase (cytochrome b-c1 complex, complex III, CIII) and cytochrome c oxidase (complex IV, CIV), that cooperate to transfer electrons derived from NADH and succinate to molecular oxygen, creating an electrochemical gradient over the inner membrane that drives transmembrane transport and the ATP synthase. Cytochrome c oxidase is the component of the respiratory chain that catalyzes the reduction of oxygen to water. Electrons originating from reduced cytochrome c in the intermembrane space (IMS) are transferred via the dinuclear copper A center (CU(A)) of subunit 2 and heme A of subunit 1 to the active site in subunit 1, a binuclear center (BNC) formed by heme A3 and copper B (CU(B)). The BNC reduces molecular oxygen to 2 water molecules using 4 electrons from cytochrome c in the IMS and 4 protons from the mitochondrial matrix. This chain is Cytochrome c oxidase subunit 2 (MT-CO2), found in Phyllostomus hastatus (Greater spear-nosed bat).